Consider the following 263-residue polypeptide: Izumo sperm-egg fusion protein 3 (263 aa).

The first 22 residues, 1-22, serve as a signal peptide directing secretion; that stretch reads MGDLWVLLFSSLSLAAFHGVRG. Over 23 to 176 the chain is Extracellular; the sequence is CLECDPKFTE…EDPKTAENRE (154 aa). N-linked (GlcNAc...) asparagine glycans are attached at residues Asn-98 and Asn-128. The helical transmembrane segment at 177 to 197 threads the bilayer; sequence ISLYLIFIAEAVILASAVLLF. The Cytoplasmic portion of the chain corresponds to 198-263; sequence HVCISHRRKM…CAESEMQTGT (66 aa). Residues 241–263 form a disordered region; the sequence is GRSNSNSLTGEPTCAESEMQTGT.

The protein belongs to the Izumo family. In terms of assembly, monomer and homodimer. Sperm-specific (at protein level).

The protein localises to the cell membrane. It localises to the cytoplasmic vesicle. It is found in the secretory vesicle. The protein resides in the acrosome inner membrane. In terms of biological role, plays an important role in the biogenesis of the acrosome during sperm development. This chain is Izumo sperm-egg fusion protein 3 (Izumo3), found in Mus musculus (Mouse).